The following is a 329-amino-acid chain: T-lymphocyte activation antigen CD86 (329 aa).

The N-terminal stretch at 1-23 (MDPQCTMGLSNILFVMAFLLSGA) is a signal peptide. Residues 24 to 247 (APLKIQAYFN…DPQPPPDHIP (224 aa)) lie on the Extracellular side of the membrane. N-linked (GlcNAc...) asparagine glycans are attached at residues Asn-33, Asn-47, Asn-135, Asn-146, Asn-154, Asn-177, Asn-192, and Asn-213. One can recognise an Ig-like V-type domain in the interval 33 to 131 (NETADLPCQF…RIHQMNSELS (99 aa)). An intrachain disulfide couples Cys-40 to Cys-110. The 76-residue stretch at 150-225 (NVYINLTCSS…IFCILETDKT (76 aa)) folds into the Ig-like C2-type domain. Cys-157 and Cys-218 form a disulfide bridge. A helical transmembrane segment spans residues 248–268 (WITAVLPTVIICVMVFCLILW). The Cytoplasmic segment spans residues 269 to 329 (KWKKKKRPRN…SSCDKSDTCF (61 aa)). The segment at 277 to 329 (RNSYKCGTNTMEREESEQTKKREKIHIPERSDEAQRVFKSSKTSSCDKSDTCF) is disordered. Over residues 287–312 (MEREESEQTKKREKIHIPERSDEAQR) the composition is skewed to basic and acidic residues.

In terms of assembly, homodimer. Interacts with MARCH8. Interacts (via cytoplasmic domain) with PHB1 and PHB2; the interactions increases after priming with CD40. Interacts with CD28. (Microbial infection) Interacts with adenovirus subgroup b fiber protein. As to quaternary structure, (Microbial infection) Interacts with Orthopoxvirus OPG038/M2 protein, inhibiting the interaction with CTLA4 and CD28. In terms of processing, polyubiquitinated; which is promoted by MARCH8 and results in endocytosis and lysosomal degradation. As to expression, expressed by activated B-lymphocytes and monocytes.

It localises to the cell membrane. Its function is as follows. Receptor involved in the costimulatory signal essential for T-lymphocyte proliferation and interleukin-2 production, by binding CD28 or CTLA-4. May play a critical role in the early events of T-cell activation and costimulation of naive T-cells, such as deciding between immunity and anergy that is made by T-cells within 24 hours after activation. Also involved in the regulation of B cells function, plays a role in regulating the level of IgG(1) produced. Upon CD40 engagement, activates NF-kappa-B signaling pathway via phospholipase C and protein kinase C activation. Interferes with the formation of CD86 clusters, and thus acts as a negative regulator of T-cell activation. Functionally, (Microbial infection) Acts as a receptor for adenovirus subgroup B. The protein is T-lymphocyte activation antigen CD86 (CD86) of Homo sapiens (Human).